Consider the following 93-residue polypeptide: Small ribosomal subunit protein bS20 (93 aa).

It belongs to the bacterial ribosomal protein bS20 family.

Binds directly to 16S ribosomal RNA. The protein is Small ribosomal subunit protein bS20 of Dictyoglomus turgidum (strain DSM 6724 / Z-1310).